Consider the following 213-residue polypeptide: Amelotin (213 aa).

The signal sequence occupies residues 1–16 (MKTMILLLCLLGSAQS). Disordered regions lie at residues 22–43 (NPAS…LPQQ) and 162–213 (GAKA…NRTQ). The span at 33 to 43 (TPGQVTPLPQQ) shows a compositional bias: polar residues. A compositionally biased stretch (low complexity) spans 169 to 180 (GTTPGHVTTPGV).

This sequence belongs to the amelotin family. Post-translationally, phosphorylated by FAM20C in vitro. O-glycosylated. As to expression, specifically expressed in maturation-stage ameloblasts.

Its subcellular location is the secreted. Its function is as follows. Is a promoter of calcium phosphate mineralization, playing a critical role in the formation of the compact, mineralized, aprismatic enamel surface layer during the maturation stage of amelogenesis. The polypeptide is Amelotin (Amtn) (Mus musculus (Mouse)).